The following is a 239-amino-acid chain: Skn-1 dependent zygotic transcript 1 protein (239 aa).

Its function is as follows. May have a role in mesendoderm development during embryogenesis. The sequence is that of Skn-1 dependent zygotic transcript 1 protein from Caenorhabditis briggsae.